Consider the following 485-residue polypeptide: CUGBP Elav-like family member 5 (485 aa).

The span at 1–11 shows a compositional bias: basic and acidic residues; sequence MARLTESEARR. The segment at 1-40 is disordered; it reads MARLTESEARRQQQQLLQPRPSPVGSSGPEPPGGQPDGMK. Over residues 12 to 28 the composition is skewed to low complexity; the sequence is QQQQLLQPRPSPVGSSG. 3 RRM domains span residues 45–126, 134–214, and 400–478; these read IKLF…PADS, RKLF…FADT, and CNLF…LKRP.

This sequence belongs to the CELF/BRUNOL family. As to expression, expressed in brain.

It is found in the nucleus. The protein localises to the cytoplasm. In terms of biological role, RNA-binding protein implicated in the regulation of pre-mRNA alternative splicing. Mediates exon inclusion and/or exclusion in pre-mRNA that are subject to tissue-specific and developmentally regulated alternative splicing. Specifically activates exon 5 inclusion of cardiac isoforms of TNNT2 during heart remodeling at the juvenile to adult transition. Binds to muscle-specific splicing enhancer (MSE) intronic sites flanking the alternative exon 5 of TNNT2 pre-mRNA. The chain is CUGBP Elav-like family member 5 (CELF5) from Homo sapiens (Human).